The following is a 394-amino-acid chain: Exodeoxyribonuclease 7 large subunit (394 aa).

The protein belongs to the XseA family. In terms of assembly, heterooligomer composed of large and small subunits.

It localises to the cytoplasm. The enzyme catalyses Exonucleolytic cleavage in either 5'- to 3'- or 3'- to 5'-direction to yield nucleoside 5'-phosphates.. Functionally, bidirectionally degrades single-stranded DNA into large acid-insoluble oligonucleotides, which are then degraded further into small acid-soluble oligonucleotides. The polypeptide is Exodeoxyribonuclease 7 large subunit (Thermotoga maritima (strain ATCC 43589 / DSM 3109 / JCM 10099 / NBRC 100826 / MSB8)).